The chain runs to 459 residues: ATP synthase subunit beta (459 aa).

148–155 is an ATP binding site; the sequence is GGAGVGKT.

It belongs to the ATPase alpha/beta chains family. F-type ATPases have 2 components, CF(1) - the catalytic core - and CF(0) - the membrane proton channel. CF(1) has five subunits: alpha(3), beta(3), gamma(1), delta(1), epsilon(1). CF(0) has three main subunits: a(1), b(2) and c(9-12). The alpha and beta chains form an alternating ring which encloses part of the gamma chain. CF(1) is attached to CF(0) by a central stalk formed by the gamma and epsilon chains, while a peripheral stalk is formed by the delta and b chains.

It is found in the cell inner membrane. The enzyme catalyses ATP + H2O + 4 H(+)(in) = ADP + phosphate + 5 H(+)(out). In terms of biological role, produces ATP from ADP in the presence of a proton gradient across the membrane. The catalytic sites are hosted primarily by the beta subunits. This chain is ATP synthase subunit beta, found in Vesicomyosocius okutanii subsp. Calyptogena okutanii (strain HA).